The chain runs to 215 residues: Serine acetyltransferase (215 aa).

This sequence belongs to the transferase hexapeptide repeat family.

It localises to the cytoplasm. The catalysed reaction is L-serine + acetyl-CoA = O-acetyl-L-serine + CoA. It participates in amino-acid biosynthesis; L-cysteine biosynthesis; L-cysteine from L-serine: step 1/2. The protein is Serine acetyltransferase (cysE) of Staphylococcus aureus (strain MRSA252).